A 694-amino-acid chain; its full sequence is Phosphatase and actin regulator 4 (694 aa).

Disordered regions lie at residues 1-354 and 375-405; these read MEDP…SPLV and QDIS…PSRL. Basic residues predominate over residues 45–54; sequence KPWKWRKKKS. Positions 55–84 are enriched in basic and acidic residues; it reads SDKFKETSEVLERKISMRKPREELVKRGVL. The stretch at 63–88 is one RPEL 1 repeat; it reads EVLERKISMRKPREELVKRGVLLEDP. Ser-116, Ser-118, Ser-129, and Ser-145 each carry phosphoserine. Low complexity-rich tracts occupy residues 184–209 and 231–249; these read AGST…TAAT and TLPA…TAPA. The segment covering 250–259 has biased composition (pro residues); the sequence is KQPPIPPPKP. Residues Ser-264, Ser-285, Ser-335, and Ser-337 each carry the phosphoserine modification. The segment covering 329-352 has biased composition (pro residues); that stretch reads LIIPPSSPSPPLPTHIPPEPPRSP. Residues 381-392 show a composition bias toward basic and acidic residues; the sequence is EDQKTEVPKKIQ. Ser-420 carries the phosphoserine modification. Thr-425 bears the Phosphothreonine mark. Phosphoserine occurs at positions 436, 446, 457, 503, 505, 549, and 582. The disordered stretch occupies residues 467–562; the sequence is VPDDEEEEQT…TNLNSWPRKS (96 aa). The segment covering 546–559 has biased composition (polar residues); that stretch reads SRPSEPETNLNSWP. 2 RPEL repeats span residues 575-600 and 613-638; these read NTLI…QPKN and RRLT…RFNE. Residues 589 to 608 form a disordered region; that stretch reads ELEQRNILQPKNEADRQAEK. Ser-620 is subject to Phosphoserine.

This sequence belongs to the phosphatase and actin regulator family. As to quaternary structure, binds PPP1CA and actin.

It localises to the cytoplasm. The protein resides in the cell projection. Its subcellular location is the lamellipodium. Functionally, regulator of protein phosphatase 1 (PP1) required for neural tube and optic fissure closure, and enteric neural crest cell (ENCCs) migration during development. Acts as an activator of PP1 by interacting with PPP1CA and preventing phosphorylation of PPP1CA at 'Thr-320'. During neural tube closure, localizes to the ventral neural tube and activates PP1, leading to down-regulate cell proliferation within cranial neural tissue and the neural retina. Also acts as a regulator of migration of enteric neural crest cells (ENCCs) by activating PP1, leading to dephosphorylation and subsequent activation of cofilin (COF1 or COF2) and repression of the integrin signaling through the RHO/ROCK pathway. The chain is Phosphatase and actin regulator 4 (Phactr4) from Mus musculus (Mouse).